We begin with the raw amino-acid sequence, 556 residues long: 2-isopropylmalate synthase (556 aa).

Residues 33–307 enclose the Pyruvate carboxyltransferase domain; it reads PIWCSSDLRD…DPELDFSDID (275 aa). D42, H246, H248, and N282 together coordinate Mg(2+). Residues 439–556 form a regulatory domain region; the sequence is ANTPYALISH…SLSQTQAKAA (118 aa).

The protein belongs to the alpha-IPM synthase/homocitrate synthase family. LeuA type 2 subfamily. In terms of assembly, homodimer. Mg(2+) is required as a cofactor.

The protein resides in the cytoplasm. It carries out the reaction 3-methyl-2-oxobutanoate + acetyl-CoA + H2O = (2S)-2-isopropylmalate + CoA + H(+). It functions in the pathway amino-acid biosynthesis; L-leucine biosynthesis; L-leucine from 3-methyl-2-oxobutanoate: step 1/4. Functionally, catalyzes the condensation of the acetyl group of acetyl-CoA with 3-methyl-2-oxobutanoate (2-ketoisovalerate) to form 3-carboxy-3-hydroxy-4-methylpentanoate (2-isopropylmalate). The chain is 2-isopropylmalate synthase from Pseudomonas savastanoi pv. phaseolicola (strain 1448A / Race 6) (Pseudomonas syringae pv. phaseolicola (strain 1448A / Race 6)).